The sequence spans 92 residues: Probable Fe(2+)-trafficking protein (92 aa).

It belongs to the Fe(2+)-trafficking protein family.

Could be a mediator in iron transactions between iron acquisition and iron-requiring processes, such as synthesis and/or repair of Fe-S clusters in biosynthetic enzymes. The protein is Probable Fe(2+)-trafficking protein of Xanthomonas oryzae pv. oryzae (strain MAFF 311018).